The primary structure comprises 212 residues: Thymidylate kinase (212 aa).

Residue 11–18 (GPEGAGKS) coordinates ATP.

Belongs to the thymidylate kinase family.

The enzyme catalyses dTMP + ATP = dTDP + ADP. Phosphorylation of dTMP to form dTDP in both de novo and salvage pathways of dTTP synthesis. In Streptococcus sanguinis (strain SK36), this protein is Thymidylate kinase.